Consider the following 367-residue polypeptide: tRNA/tmRNA (uracil-C(5))-methyltransferase (367 aa).

S-adenosyl-L-methionine-binding residues include Gln-189, Tyr-217, Asn-222, Glu-238, and Asp-298. Cys-323 serves as the catalytic Nucleophile. The Proton acceptor role is filled by Glu-357.

It belongs to the class I-like SAM-binding methyltransferase superfamily. RNA M5U methyltransferase family. TrmA subfamily.

It carries out the reaction uridine(54) in tRNA + S-adenosyl-L-methionine = 5-methyluridine(54) in tRNA + S-adenosyl-L-homocysteine + H(+). It catalyses the reaction uridine(341) in tmRNA + S-adenosyl-L-methionine = 5-methyluridine(341) in tmRNA + S-adenosyl-L-homocysteine + H(+). Its function is as follows. Dual-specificity methyltransferase that catalyzes the formation of 5-methyluridine at position 54 (m5U54) in all tRNAs, and that of position 341 (m5U341) in tmRNA (transfer-mRNA). This Pseudoalteromonas translucida (strain TAC 125) protein is tRNA/tmRNA (uracil-C(5))-methyltransferase.